A 451-amino-acid polypeptide reads, in one-letter code: UDP-N-acetylmuramoylalanine--D-glutamate ligase (451 aa).

ATP is bound at residue 116 to 122; that stretch reads GTNGKTT.

The protein belongs to the MurCDEF family.

The protein resides in the cytoplasm. It carries out the reaction UDP-N-acetyl-alpha-D-muramoyl-L-alanine + D-glutamate + ATP = UDP-N-acetyl-alpha-D-muramoyl-L-alanyl-D-glutamate + ADP + phosphate + H(+). Its pathway is cell wall biogenesis; peptidoglycan biosynthesis. In terms of biological role, cell wall formation. Catalyzes the addition of glutamate to the nucleotide precursor UDP-N-acetylmuramoyl-L-alanine (UMA). The protein is UDP-N-acetylmuramoylalanine--D-glutamate ligase of Clostridioides difficile (strain 630) (Peptoclostridium difficile).